The sequence spans 132 residues: Protein NrdI (132 aa).

This sequence belongs to the NrdI family.

In terms of biological role, probably involved in ribonucleotide reductase function. This chain is Protein NrdI, found in Agrobacterium fabrum (strain C58 / ATCC 33970) (Agrobacterium tumefaciens (strain C58)).